A 36-amino-acid polypeptide reads, in one-letter code: Protein YnfP (36 aa).

The protein is Protein YnfP of Escherichia coli (strain K12).